The sequence spans 258 residues: L-fucose dehydrogenase (258 aa).

Ser17, Ile19, Arg39, His40, Glu63, Leu64, and Asn90 together coordinate NADP(+). Asn94, Ser140, Lys141, Gln147, and Tyr153 together coordinate beta-L-fucose. The NADP(+) site is built by Tyr153 and Lys157. Tyr153 acts as the Proton acceptor in catalysis. Beta-L-fucose-binding residues include Ala184 and Glu185. NADP(+)-binding residues include Val186 and Thr188.

The protein belongs to the short-chain dehydrogenases/reductases (SDR) family. As to quaternary structure, homotetramer; dimer of dimers.

It catalyses the reaction beta-L-fucose + NADP(+) = L-fucono-1,5-lactone + NADPH + H(+). The catalysed reaction is D-arabinose + NADP(+) = D-arabinono-1,5-lactone + NADPH + H(+). It participates in carbohydrate degradation; L-fucose degradation. In terms of biological role, L-fucose dehydrogenase involved in an L-fucose degradation pathway. Catalyzes the oxidation of L-fucose to L-fucono-1,5-lactone. Can also act on D-arabinose, with lower catalytic efficiency, and has weak activity with L-galactose and 4-deoxy-L-fucose. Shows a preference for NADP(+) over NAD(+). The polypeptide is L-fucose dehydrogenase (Burkholderia multivorans (strain ATCC 17616 / 249)).